We begin with the raw amino-acid sequence, 116 residues long: Propanediol dehydratase-reactivating factor small subunit (116 aa).

Glutamate 31 is a Mg(2+) binding site.

Belongs to the DdrB/PduH family. In terms of assembly, forms a heterotetramer PduG(2)/PduH(2). Requires Mg(2+) as cofactor.

The protein resides in the bacterial microcompartment. The catalysed reaction is ATP + H2O = ADP + phosphate + H(+). Its pathway is polyol metabolism; 1,2-propanediol degradation. Small subunit of the propanediol dehydratase-reactivating factor (DDR), which reactivates suicidally inhibited adenosylcobalamin-dependent propanediol dehydratase (diol dehydratase, DDH) found in the bacterial microcompartment (BMC) dedicated to 1,2-propanediol (1,2-PD) degradation. Reactivates inactivated DDH in the presence of ATP, Mg(2+) and free adenosylcobalamin (AdoCbl), by mediating the exchange of the tightly bound damaged cofactor AdoCbl for a free intact one. In terms of biological role, expression of a cosmid containing the full 21-gene pdu operon in E.coli allows E.coli to grow on 1,2-propanediol (1,2-PD) with the appearance of bacterial microcompartments (BMC) in its cytoplasm. Functionally, the 1,2-PD-specific bacterial microcompartment (BMC) concentrates low levels of 1,2-PD catabolic enzymes, concentrates volatile reaction intermediates thus enhancing pathway flux and keeps the level of toxic, mutagenic propionaldehyde low. The polypeptide is Propanediol dehydratase-reactivating factor small subunit (Citrobacter freundii).